Consider the following 124-residue polypeptide: Small ribosomal subunit protein uS12 (124 aa).

Position 89 is a 3-methylthioaspartic acid (Asp-89). Positions 103–124 (DTAGVKDRRQGRSKYGAKRPKD) are disordered. Residues 113–124 (GRSKYGAKRPKD) show a composition bias toward basic residues.

Belongs to the universal ribosomal protein uS12 family. In terms of assembly, part of the 30S ribosomal subunit. Contacts proteins S8 and S17. May interact with IF1 in the 30S initiation complex.

In terms of biological role, with S4 and S5 plays an important role in translational accuracy. Interacts with and stabilizes bases of the 16S rRNA that are involved in tRNA selection in the A site and with the mRNA backbone. Located at the interface of the 30S and 50S subunits, it traverses the body of the 30S subunit contacting proteins on the other side and probably holding the rRNA structure together. The combined cluster of proteins S8, S12 and S17 appears to hold together the shoulder and platform of the 30S subunit. This chain is Small ribosomal subunit protein uS12, found in Acaryochloris marina (strain MBIC 11017).